The following is a 215-amino-acid chain: FBD domain-containing protein At3g58975 (215 aa).

The region spanning 122 to 199 (RSLTSCPVKK…KLSSCNVQLL (78 aa)) is the FBD domain.

The protein is FBD domain-containing protein At3g58975 of Arabidopsis thaliana (Mouse-ear cress).